The sequence spans 66 residues: Photosystem II reaction center protein J (66 aa).

Positions 1–23 (MSGNKSPFPDGRIPDRLPDGRPA) are disordered. The chain crosses the membrane as a helical span at residues 37 to 57 (LWLVATAGGMAVLFVVGLFFY).

Belongs to the PsbJ family. As to quaternary structure, PSII is composed of 1 copy each of membrane proteins PsbA, PsbB, PsbC, PsbD, PsbE, PsbF, PsbH, PsbI, PsbJ, PsbK, PsbL, PsbM, PsbT, PsbX, PsbY, PsbZ, Psb30/Ycf12, peripheral proteins PsbO, CyanoQ (PsbQ), PsbU, PsbV and a large number of cofactors. It forms dimeric complexes.

The protein resides in the cellular thylakoid membrane. One of the components of the core complex of photosystem II (PSII). PSII is a light-driven water:plastoquinone oxidoreductase that uses light energy to abstract electrons from H(2)O, generating O(2) and a proton gradient subsequently used for ATP formation. It consists of a core antenna complex that captures photons, and an electron transfer chain that converts photonic excitation into a charge separation. The chain is Photosystem II reaction center protein J from Parasynechococcus marenigrum (strain WH8102).